Here is a 323-residue protein sequence, read N- to C-terminus: SURF1-like protein (323 aa).

Over residues 57–71 (DAPKSRENREKDGGK) the composition is skewed to basic and acidic residues. Positions 57-76 (DAPKSRENREKDGGKSKKSK) are disordered. The next 2 helical transmembrane spans lie at 81-101 (WSTG…LGIW) and 299-319 (HLNY…MWIH).

Belongs to the SURF1 family.

The protein localises to the mitochondrion inner membrane. Its function is as follows. Probably involved in the biogenesis of the COX complex. In Caenorhabditis elegans, this protein is SURF1-like protein (sft-1).